Reading from the N-terminus, the 169-residue chain is 16S rRNA aminocarboxypropyltransferase (169 aa).

Residues threonine 17, leucine 67, leucine 90, and threonine 109 each coordinate S-adenosyl-L-methionine.

It belongs to the TDD superfamily. TSR3 family.

The protein resides in the cytoplasm. The enzyme catalyses an N(1)-methylpseudouridine in rRNA + S-adenosyl-L-methionine = N(1)-methyl-N(3)-[(3S)-3-amino-3-carboxypropyl]pseudouridine in rRNA + S-methyl-5'-thioadenosine + H(+). Functionally, aminocarboxypropyltransferase that catalyzes the aminocarboxypropyl transfer on pseudouridine corresponding to position 914 in M.jannaschii 16S rRNA. It constitutes the last step in biosynthesis of the hypermodified N1-methyl-N3-(3-amino-3-carboxypropyl) pseudouridine (m1acp3-Psi). This Methanothermobacter thermautotrophicus (strain ATCC 29096 / DSM 1053 / JCM 10044 / NBRC 100330 / Delta H) (Methanobacterium thermoautotrophicum) protein is 16S rRNA aminocarboxypropyltransferase.